The primary structure comprises 1486 residues: Chromosome partition protein MukB (1486 aa).

ATP is bound at residue 34 to 41 (GGNGAGKS). 3 coiled-coil regions span residues 326-418 (LEAD…QYNQ), 444-480 (LETFQAKELEATEKMLSLEQKMSMAQTAHSQFEQAYQ), and 509-603 (RHLA…RAPV). The tract at residues 666–783 (PGGSEDQRLN…EVPLFGRAAR (118 aa)) is flexible hinge. Coiled coils occupy residues 835–923 (EAEI…AKLE), 977–1115 (EMLS…TAKA), and 1209–1266 (VEAI…QNVS).

This sequence belongs to the SMC family. MukB subfamily. In terms of assembly, homodimerization via its hinge domain. Binds to DNA via its C-terminal region. Interacts, and probably forms a ternary complex, with MukE and MukF via its C-terminal region. The complex formation is stimulated by calcium or magnesium. Interacts with tubulin-related protein FtsZ.

The protein localises to the cytoplasm. The protein resides in the nucleoid. Its function is as follows. Plays a central role in chromosome condensation, segregation and cell cycle progression. Functions as a homodimer, which is essential for chromosome partition. Involved in negative DNA supercoiling in vivo, and by this means organize and compact chromosomes. May achieve or facilitate chromosome segregation by condensation DNA from both sides of a centrally located replisome during cell division. The sequence is that of Chromosome partition protein MukB from Escherichia coli (strain 55989 / EAEC).